Reading from the N-terminus, the 605-residue chain is Alpha-fetoprotein (605 aa).

An N-terminal signal peptide occupies residues 1 to 18 (MKWITPASLILLLHFAAS). 3 Albumin domains span residues 19–207 (KALH…SIAK), 208–398 (ELRE…EELQ), and 399–597 (KHIE…KLIS). Cystine bridges form between cysteine 95–cysteine 110, cysteine 109–cysteine 120, cysteine 144–cysteine 189, cysteine 188–cysteine 197, cysteine 220–cysteine 266, cysteine 265–cysteine 273, cysteine 285–cysteine 299, and cysteine 298–cysteine 309. Phosphoserine occurs at positions 107, 111, and 113. A glycan (N-linked (GlcNAc...) asparagine) is linked at asparagine 247. Residue serine 340 is modified to Phosphoserine. Disulfide bonds link cysteine 380–cysteine 389, cysteine 412–cysteine 458, cysteine 457–cysteine 468, cysteine 481–cysteine 497, cysteine 496–cysteine 507, cysteine 534–cysteine 579, and cysteine 578–cysteine 587. Serine 440 carries the phosphoserine modification. The N-linked (GlcNAc...) asparagine glycan is linked to asparagine 498.

Belongs to the ALB/AFP/VDB family. Glycosylated; contains two glycans. Post-translationally, sulfated. In terms of tissue distribution, plasma.

The protein localises to the secreted. Binds estrogens, fatty acids and metals. The sequence is that of Alpha-fetoprotein (Afp) from Mus musculus (Mouse).